A 395-amino-acid polypeptide reads, in one-letter code: Phosphopentomutase (395 aa).

Residues Asp14, Asp286, His291, Asp327, His328, and His339 each contribute to the Mn(2+) site.

Belongs to the phosphopentomutase family. Mn(2+) serves as cofactor.

Its subcellular location is the cytoplasm. The catalysed reaction is 2-deoxy-alpha-D-ribose 1-phosphate = 2-deoxy-D-ribose 5-phosphate. The enzyme catalyses alpha-D-ribose 1-phosphate = D-ribose 5-phosphate. It functions in the pathway carbohydrate degradation; 2-deoxy-D-ribose 1-phosphate degradation; D-glyceraldehyde 3-phosphate and acetaldehyde from 2-deoxy-alpha-D-ribose 1-phosphate: step 1/2. Its function is as follows. Isomerase that catalyzes the conversion of deoxy-ribose 1-phosphate (dRib-1-P) and ribose 1-phosphate (Rib-1-P) to deoxy-ribose 5-phosphate (dRib-5-P) and ribose 5-phosphate (Rib-5-P), respectively. This chain is Phosphopentomutase, found in Staphylococcus haemolyticus (strain JCSC1435).